A 360-amino-acid chain; its full sequence is POU domain, class 5, transcription factor 1 (360 aa).

Disordered regions lie at residues 1–53 and 87–117; these read MAGH…GVGP and QGGL…PCTV. A 9aaTAD motif is present at residues 4-12; sequence HLASDFAFS. Over residues 17–26 the composition is skewed to gly residues; the sequence is GGGDGPGGPE. The residue at position 111 (Ser-111) is a Phosphoserine; by MAPK. Residue Lys-123 forms a Glycyl lysine isopeptide (Lys-Gly) (interchain with G-Cter in SUMO) linkage. The region spanning 138-212 is the POU-specific domain; it reads DIKALQKELE…LLQKWVEEAD (75 aa). DNA is bound by residues Arg-157 and Gln-164. 2 DNA-binding regions span residues 180–186 and 193–196; these read SQTTICR and SFKN. Residues 230 to 289 constitute a DNA-binding region (homeobox); that stretch reads RKRKRTSIENRVRGSLENLFLQCPKPTLQQISHIAQQLGLEKDVVRVWFCNRRQKGKRSS. Thr-235 is subject to Phosphothreonine. Phosphoserine is present on residues Ser-236, Ser-289, Ser-290, and Ser-355.

It belongs to the POU transcription factor family. Class-5 subfamily. In terms of assembly, interacts with PKM. Interacts with WWP2. Interacts with UBE2I and ZSCAN10. Interacts with PCGF1. Interacts with ESRRB; recruits ESRRB near the POU5F1-SOX2 element in the NANOG proximal promoter; the interaction is DNA independent. Interacts with ZNF322. Interacts with MAPK8 and MAPK9; the interaction allows MAPK8 and MAPK9 to phosphorylate POU5F1 on Ser-355. Interacts (when phosphorylated on Ser-355) with FBXW8. Interacts with FBXW4. Interacts with SOX2 and SOX15; binds synergistically with either SOX2 or SOX15 to DNA. Interacts with DDX56. In terms of processing, sumoylation enhances the protein stability, DNA binding and transactivation activity. Sumoylation is required for enhanced YES1 expression. Post-translationally, ubiquitinated; undergoes 'Lys-63'-linked polyubiquitination by WWP2 leading to proteasomal degradation. ERK1/2-mediated phosphorylation at Ser-111 promotes nuclear exclusion and proteasomal degradation. Phosphorylation at Thr-235 and Ser-236 decrease DNA-binding and alters ability to activate transcription.

The protein localises to the cytoplasm. The protein resides in the nucleus. Functionally, transcription factor that binds to the octamer motif (5'-ATTTGCAT-3'). Forms a trimeric complex with SOX2 or SOX15 on DNA and controls the expression of a number of genes involved in embryonic development such as YES1, FGF4, UTF1 and ZFP206. Critical for early embryogenesis and for embryonic stem cell pluripotency. In Macaca mulatta (Rhesus macaque), this protein is POU domain, class 5, transcription factor 1 (POU5F1).